We begin with the raw amino-acid sequence, 115 residues long: Putative HNH nuclease YajD (115 aa).

In terms of domain architecture, HNH spans 27 to 75 (CGRCSREFVYSNLRELTVHHIDHDHTNNPEDGSNWELLCLYCHDHEHSK).

It belongs to the HNH nuclease family.

The polypeptide is Putative HNH nuclease YajD (yajD) (Escherichia coli O157:H7).